The following is a 180-amino-acid chain: UPF0149 protein XAC3406 (180 aa).

The protein belongs to the UPF0149 family.

The protein is UPF0149 protein XAC3406 of Xanthomonas axonopodis pv. citri (strain 306).